We begin with the raw amino-acid sequence, 713 residues long: Peroxisomal biogenesis factor 8 (713 aa).

The disordered stretch occupies residues 1–31 (MYRLGSQGRSIQSQLQNGDSSSGRPLQLQGT). The segment covering 7 to 30 (QGRSIQSQLQNGDSSSGRPLQLQG) has biased composition (polar residues). The Microbody targeting signal signature appears at 711–713 (AKL).

Interacts with PEX5 (via N-terminus).

It is found in the peroxisome membrane. Essential component of the machinery required for the import of both PTS1 and PTS2 (and perhaps all) peroxisomal matrix proteins. Binding of PEX8 to the N-terminus of PEX5 cargo receptor induces a conformational change of the TPR domains and decrease their binding affinity to cargo, facilitating the release of the PTS1 proteins within the peroxisome. This is Peroxisomal biogenesis factor 8 from Komagataella phaffii (strain GS115 / ATCC 20864) (Yeast).